A 275-amino-acid polypeptide reads, in one-letter code: 18S rRNA (guanine(1575)-N(7))-methyltransferase (275 aa).

The tract at residues 256–275 (RGRKVAKDSKFTGRKRRHRF) is disordered. The short motif at 257–264 (GRKVAKDS) is the Nuclear localization signal element.

This sequence belongs to the class I-like SAM-binding methyltransferase superfamily. BUD23/WBSCR22 family. Interacts with TRM112. Interacts with ECM16.

Its subcellular location is the cytoplasm. It localises to the nucleus. It catalyses the reaction guanosine(1575) in yeast 18S rRNA + S-adenosyl-L-methionine = N(7)-methylguanosine(1575) in yeast 18S rRNA + S-adenosyl-L-homocysteine. Functionally, S-adenosyl-L-methionine-dependent methyltransferase that specifically methylates the N(7) position of guanine 1575 (m7G1575) in 18S rRNA. Requires the methyltransferase adapter protein TRM112 for full rRNA methyltransferase activity. Important for biogenesis end export of the 40S ribosomal subunit independent on its methyltransferase activity. Required for efficient cleavage of the primary 35S precursor rRNA at site A2. Involved in positioning the proximal bud pole signal. The chain is 18S rRNA (guanine(1575)-N(7))-methyltransferase (BUD23) from Saccharomyces cerevisiae (strain ATCC 204508 / S288c) (Baker's yeast).